The chain runs to 379 residues: Succinyl-diaminopimelate desuccinylase (379 aa).

H70 lines the Zn(2+) pocket. The active site involves D72. Position 103 (D103) interacts with Zn(2+). E137 (proton acceptor) is an active-site residue. Zn(2+)-binding residues include E138, E166, and H352.

Belongs to the peptidase M20A family. DapE subfamily. In terms of assembly, homodimer. Requires Zn(2+) as cofactor. Co(2+) serves as cofactor.

The catalysed reaction is N-succinyl-(2S,6S)-2,6-diaminopimelate + H2O = (2S,6S)-2,6-diaminopimelate + succinate. It participates in amino-acid biosynthesis; L-lysine biosynthesis via DAP pathway; LL-2,6-diaminopimelate from (S)-tetrahydrodipicolinate (succinylase route): step 3/3. Catalyzes the hydrolysis of N-succinyl-L,L-diaminopimelic acid (SDAP), forming succinate and LL-2,6-diaminopimelate (DAP), an intermediate involved in the bacterial biosynthesis of lysine and meso-diaminopimelic acid, an essential component of bacterial cell walls. In Burkholderia vietnamiensis (strain G4 / LMG 22486) (Burkholderia cepacia (strain R1808)), this protein is Succinyl-diaminopimelate desuccinylase.